We begin with the raw amino-acid sequence, 959 residues long: Translation initiation factor IF-2 (959 aa).

A compositionally biased stretch (basic and acidic residues) spans 1–10; that stretch reads MSDKTNDDKT. A disordered region spans residues 1 to 374; the sequence is MSDKTNDDKT…SQMQETREKI (374 aa). Positions 27–37 are enriched in polar residues; sequence EQSTVRQNFSH. Composition is skewed to low complexity over residues 63 to 118 and 128 to 138; these read AAAA…VTKP and QRPGGQQAQRP. Composition is skewed to basic and acidic residues over residues 154 to 225 and 232 to 241; these read SEMD…EAAK and ARSERRDDAR. Low complexity predominate over residues 246–284; that stretch reads GARPQQAGRPQGGRPQPAGRPQQGSPRPAPIIADAAPIA. Residues 318-333 are compositionally biased toward basic and acidic residues; the sequence is PEVRAPKVVKGEDDRR. The region spanning 457-626 is the tr-type G domain; that stretch reads SRPPVVTIMG…LLQAEMLDLK (170 aa). The tract at residues 466–473 is G1; that stretch reads GHVDHGKT. 466 to 473 provides a ligand contact to GTP; it reads GHVDHGKT. The G2 stretch occupies residues 491 to 495; that stretch reads GITQH. Residues 512–515 form a G3 region; the sequence is DTPG. GTP-binding positions include 512 to 516 and 566 to 569; these read DTPGH and NKID. Residues 566-569 form a G4 region; sequence NKID. The interval 602-604 is G5; the sequence is SAK.

This sequence belongs to the TRAFAC class translation factor GTPase superfamily. Classic translation factor GTPase family. IF-2 subfamily.

The protein localises to the cytoplasm. Its function is as follows. One of the essential components for the initiation of protein synthesis. Protects formylmethionyl-tRNA from spontaneous hydrolysis and promotes its binding to the 30S ribosomal subunits. Also involved in the hydrolysis of GTP during the formation of the 70S ribosomal complex. The protein is Translation initiation factor IF-2 of Brucella ovis (strain ATCC 25840 / 63/290 / NCTC 10512).